Here is a 122-residue protein sequence, read N- to C-terminus: Large ribosomal subunit protein uL18 (122 aa).

The protein belongs to the universal ribosomal protein uL18 family. As to quaternary structure, part of the 50S ribosomal subunit; part of the 5S rRNA/L5/L18/L25 subcomplex. Contacts the 5S and 23S rRNAs.

This is one of the proteins that bind and probably mediate the attachment of the 5S RNA into the large ribosomal subunit, where it forms part of the central protuberance. The protein is Large ribosomal subunit protein uL18 of Mycobacterium tuberculosis (strain ATCC 25177 / H37Ra).